We begin with the raw amino-acid sequence, 405 residues long: Argininosuccinate synthase (405 aa).

ATP is bound at residue 9–17 (AYSGGLDTS). Positions 87 and 92 each coordinate L-citrulline. An ATP-binding site is contributed by Gly117. L-aspartate-binding residues include Thr119, Asn123, and Asp124. Asn123 contributes to the L-citrulline binding site. L-citrulline is bound by residues Arg127, Ser176, Ser185, Glu262, and Tyr274.

It belongs to the argininosuccinate synthase family. Type 1 subfamily. As to quaternary structure, homotetramer.

The protein resides in the cytoplasm. The enzyme catalyses L-citrulline + L-aspartate + ATP = 2-(N(omega)-L-arginino)succinate + AMP + diphosphate + H(+). It functions in the pathway amino-acid biosynthesis; L-arginine biosynthesis; L-arginine from L-ornithine and carbamoyl phosphate: step 2/3. The polypeptide is Argininosuccinate synthase (Caldicellulosiruptor saccharolyticus (strain ATCC 43494 / DSM 8903 / Tp8T 6331)).